The sequence spans 1006 residues: DNA ligase 4 (1006 aa).

Residues 1–36 form a disordered region; that stretch reads MDSDDDYNGPADTNPRLEDEESDLDEKYPNRPRNHS. Residues glutamate 318, lysine 320, leucine 321, arginine 325, glutamate 387, phenylalanine 427, glutamate 487, lysine 492, lysine 509, and lysine 511 each coordinate ATP. Lysine 320 serves as the catalytic N6-AMP-lysine intermediate. Residue glutamate 387 coordinates Mg(2+). Glutamate 487 is a binding site for Mg(2+). BRCT domains follow at residues 718–811 and 890–1002; these read PSGN…PDSL and PSGW…GFQP.

The protein belongs to the ATP-dependent DNA ligase family. Mg(2+) is required as a cofactor.

It localises to the nucleus. The catalysed reaction is ATP + (deoxyribonucleotide)n-3'-hydroxyl + 5'-phospho-(deoxyribonucleotide)m = (deoxyribonucleotide)n+m + AMP + diphosphate.. Functionally, DNA ligase involved in DNA non-homologous end joining (NHEJ); required for double-strand break (DSB) repair. This Aspergillus oryzae (strain ATCC 42149 / RIB 40) (Yellow koji mold) protein is DNA ligase 4 (lig4).